The sequence spans 288 residues: Allergen Asp f 7 homolog (288 aa).

An N-terminal signal peptide occupies residues 1–20 (MAPQFLKALTVATALGATLA). Low complexity-rich tracts occupy residues 48–107 (TVHG…SSSV) and 117–129 (TTSTPAPEPTTST). Residues 48–161 (TVHGTPGPDY…PPVVSIPPIG (114 aa)) are disordered. Residues 130 to 151 (TPPPPPPAMTTPPPPPPPPATK) show a composition bias toward pro residues. N-linked (GlcNAc...) asparagine glycosylation occurs at N268.

It is found in the secreted. The chain is Allergen Asp f 7 homolog from Arthroderma benhamiae (strain ATCC MYA-4681 / CBS 112371) (Trichophyton mentagrophytes).